We begin with the raw amino-acid sequence, 82 residues long: Diphthamide biosynthesis protein 3 (82 aa).

The region spanning 3-59 is the DPH-type MB domain; sequence TYDEIEIEDMTFEPENQMFTYPCPCGDRFQIYLDDMFEGEKVAVCPSCSLMIDVVFD. Fe cation contacts are provided by C25, C27, C47, and C50. Positions 66 to 82 are required for interaction with the elongator complex; it reads YYEEAGIHPPEPIAAAA.

It belongs to the DPH3 family. Component of the 2-(3-amino-3-carboxypropyl)histidine synthase complex composed of DPH1, DPH2, KTI11/DPH3 and a NADH-dependent reductase, predominantly CBR1. Interacts with DPH1. Interacts with DPH2. Interacts with CBR1. Interacts with elongation factor 2. Interacts with ATS1/KTI13; the interaction is direct. Interacts with the 40S ribosomal protein RPS7A. Interacts with the 40S ribosomal protein RPS19A. Interacts with the elongator complex subunit IKI3/ELP1. Interacts with the elongator complex subunit ELP2. Interacts with the elongator complex subunit ELP3. Interacts with the elongator complex subunit ELP5.

It is found in the cytoplasm. Its subcellular location is the nucleus. It catalyses the reaction [3Fe-4S](1+)-[protein] + Fe(2+)-[Dph3] = [3Fe-4S](0)-[protein] + Fe(3+)-[Dph3]. The catalysed reaction is 2 [3Fe-4S](0)-[protein] + 2 Fe(2+)-[Dph3] + NADH = 2 [4Fe-4S](1+)-[protein] + 2 [Dph3] + NAD(+) + H(+). The protein operates within protein modification; peptidyl-diphthamide biosynthesis. Required for the first step of diphthamide biosynthesis, a post-translational modification of histidine which occurs in elongation factor 2. DPH1 and DPH2 transfer a 3-amino-3-carboxypropyl (ACP) group from S-adenosyl-L-methionine (SAM) to a histidine residue, the reaction is assisted by a reduction system comprising KTI11/DPH3 and a NADH-dependent reductase, predominantly CBR1. Acts as an electron donor to reduce the Fe-S cluster in DPH1-DPH2 keeping the [4Fe-4S] clusters in the active and reduced state. Restores iron to DPH1-DPH2 iron-sulfur clusters which have degraded from [4Fe-4S] to [3Fe-4S] by donating an iron atom to reform [4Fe-4S] clusters, in a manner dependent on the presence of elongation factor 2 and SAM. Together with ATS1; associates with the elongator complex and is required for tRNA Wobble base modifications mediated by the elongator complex. The elongator complex is required for multiple tRNA modifications, including mcm5U (5-methoxycarbonylmethyl uridine), mcm5s 2U (5-methoxycarbonylmethyl-2-thiouridine), and ncm5U (5-carbamoylmethyl uridine). This is Diphthamide biosynthesis protein 3 from Saccharomyces cerevisiae (strain ATCC 204508 / S288c) (Baker's yeast).